Reading from the N-terminus, the 110-residue chain is Cytochrome c (110 aa).

Heme c-binding residues include Cys-21, Cys-24, His-25, and Met-87.

This sequence belongs to the cytochrome c family. Binds 1 heme c group covalently per subunit.

Its subcellular location is the mitochondrion intermembrane space. Electron carrier protein. The oxidized form of the cytochrome c heme group can accept an electron from the heme group of the cytochrome c1 subunit of cytochrome reductase. Cytochrome c then transfers this electron to the cytochrome oxidase complex, the final protein carrier in the mitochondrial electron-transport chain. In Kluyveromyces lactis (strain ATCC 8585 / CBS 2359 / DSM 70799 / NBRC 1267 / NRRL Y-1140 / WM37) (Yeast), this protein is Cytochrome c (CYCK).